A 92-amino-acid chain; its full sequence is Small ribosomal subunit protein uS19c (92 aa).

Belongs to the universal ribosomal protein uS19 family.

The protein resides in the plastid. It is found in the chloroplast. Its function is as follows. Protein S19 forms a complex with S13 that binds strongly to the 16S ribosomal RNA. This Phalaenopsis aphrodite subsp. formosana (Moth orchid) protein is Small ribosomal subunit protein uS19c.